A 220-amino-acid chain; its full sequence is Protein GrpE (220 aa).

Composition is skewed to polar residues over residues 1–12 and 50–63; these read MEQGDKQATYNE and AAST…QTSV. The segment at 1 to 67 is disordered; that stretch reads MEQGDKQATY…AEQTSVEAEE (67 aa).

It belongs to the GrpE family. As to quaternary structure, homodimer.

The protein localises to the cytoplasm. Participates actively in the response to hyperosmotic and heat shock by preventing the aggregation of stress-denatured proteins, in association with DnaK and GrpE. It is the nucleotide exchange factor for DnaK and may function as a thermosensor. Unfolded proteins bind initially to DnaJ; upon interaction with the DnaJ-bound protein, DnaK hydrolyzes its bound ATP, resulting in the formation of a stable complex. GrpE releases ADP from DnaK; ATP binding to DnaK triggers the release of the substrate protein, thus completing the reaction cycle. Several rounds of ATP-dependent interactions between DnaJ, DnaK and GrpE are required for fully efficient folding. This Geobacillus thermodenitrificans (strain NG80-2) protein is Protein GrpE.